Reading from the N-terminus, the 159-residue chain is Small ribosomal subunit protein uS4 (159 aa).

The S4 RNA-binding domain occupies 106-158; sequence RRLQTLVFRMGLAKSIHHARQLVVHGHVLVAGRRVTSPGFLVPRELEDKITIE.

This sequence belongs to the universal ribosomal protein uS4 family. In terms of assembly, part of the 30S ribosomal subunit. Contacts protein S5. The interaction surface between S4 and S5 is involved in control of translational fidelity.

Functionally, one of the primary rRNA binding proteins, it binds directly to 16S rRNA where it nucleates assembly of the body of the 30S subunit. With S5 and S12 plays an important role in translational accuracy. This is Small ribosomal subunit protein uS4 from Pyrobaculum calidifontis (strain DSM 21063 / JCM 11548 / VA1).